Reading from the N-terminus, the 399-residue chain is Protein DDI1 homolog 2 (399 aa).

Residues 1 to 81 (MLLTVYCVRR…VILRQKENAD (81 aa)) form the Ubiquitin-like domain. Residues 99-134 (IAVPGTSNPQQRQLPRTQAQHSSPGEMASSPQGLDN) form a disordered region. Residues 103-131 (GTSNPQQRQLPRTQAQHSSPGEMASSPQG) show a composition bias toward polar residues. Threonine 104 is subject to Phosphothreonine. Residues serine 121, serine 128, serine 150, and serine 194 each carry the phosphoserine modification. The active site involves aspartate 252. Residues 376 to 395 (EEIADQELAEAIQKSAEDAE) carry the Ubiquitin-binding motif.

Belongs to the DDI1 family. As to quaternary structure, homodimer.

The protein localises to the cytoplasm. It localises to the cytosol. The protein resides in the chromosome. Functionally, aspartic protease that mediates the cleavage of NFE2L1/NRF1 at 'Leu-104', thereby promoting release of NFE2L1/NRF1 from the endoplasmic reticulum membrane. Ubiquitination of NFE2L1/NRF1 is a prerequisite for cleavage, suggesting that DDI2 specifically recognizes and binds ubiquitinated NFE2L1/NRF1. Seems to act as a proteasomal shuttle which links the proteasome and replication fork proteins like RTF2. Required, with DDI1, for cellular survival following replication stress. Together or redudantly with DDI1, removes RTF2 from stalled forks to allow cell cycle progression after replication stress and maintains genome integrity. In Mus musculus (Mouse), this protein is Protein DDI1 homolog 2.